A 1010-amino-acid polypeptide reads, in one-letter code: 2-oxoglutarate dehydrogenase-like, mitochondrial (1010 aa).

Residues 1–107 (MSQLRLLLFR…RASVSSCTKT (107 aa)) constitute a mitochondrion transit peptide. The tract at residues 28–47 (GGRRRSSGPPTTIPRSRGGV) is disordered. Ca(2+) contacts are provided by H130, D143, and D145. The thiamine diphosphate site is built by R299, D398, N431, I433, and Q663. The Mg(2+) site is built by D398, N431, and I433.

Belongs to the alpha-ketoglutarate dehydrogenase family. The OGDHC complex comprises multiple copies of three catalytic enzyme components, the 2-oxoglutarate dehydrogenase (OGDH/E1), the dihydrolipoamide dehydrogenase (DLST/E2) and the dihydrolipoamide dehydrogenase (DLD/E3). OGDHL/E1-like isoenzyme may replace OGDH in the OGDHC complex in the brain. The presence of either ODGH/E1 or ODGHL/E1-like isoenzyme in the complex may depend on its tissular distribution. The cofactor is thiamine diphosphate. It depends on Mg(2+) as a cofactor. In terms of tissue distribution, the OGDHL-containing OGDHC complex is present in the brain, but not in the heart.

The protein resides in the mitochondrion matrix. It catalyses the reaction N(6)-[(R)-lipoyl]-L-lysyl-[protein] + 2-oxoglutarate + H(+) = N(6)-[(R)-S(8)-succinyldihydrolipoyl]-L-lysyl-[protein] + CO2. 2-oxoglutarate dehydrogenase (E1-like) component of the 2-oxoglutarate dehydrogenase multienzyme complex (OGDHC) which mediates the decarboxylation of alpha-ketoglutarate in the tricarboxylic acid cycle. The OGDHC complex catalyzes the overall conversion of 2-oxoglutarate to succinyl-CoA and CO(2) while reducing NAD(+) to NADH. The OGDHC complex is mainly active in the mitochondrion. Involved in the inhibition of cell proliferation and in apoptosis. The protein is 2-oxoglutarate dehydrogenase-like, mitochondrial of Rattus norvegicus (Rat).